The following is a 349-amino-acid chain: Core protein VP7 (349 aa).

N-linked (GlcNAc...) asparagine; by host glycosylation is present at asparagine 287.

Belongs to the orbivirus VP7 family. As to quaternary structure, homotrimer that assemble in a complex of 260 capsomers on an inner scaffold composed of VP3.

Its subcellular location is the virion. Functionally, the VP7 protein is one of the five proteins (with VP1, VP3, VP4, and VP6) which form the inner capsid of the virus. This chain is Core protein VP7 (Segment-7), found in Bluetongue virus 1 (isolate Australia) (BTV 1).